Consider the following 511-residue polypeptide: FAD-dependent monooxygenase AOL_s00215g279 (511 aa).

The signal sequence occupies residues 1-17; the sequence is MRFTLYGLLGFASLLHA. The FAD-binding PCMH-type domain occupies 85 to 256; that stretch reads CWVNPACIVS…TEFDLRTRYS (172 aa). His122 carries the post-translational modification Pros-8alpha-FAD histidine.

It belongs to the oxygen-dependent FAD-linked oxidoreductase family.

It functions in the pathway secondary metabolite biosynthesis; terpenoid biosynthesis. In terms of biological role, FAD-dependent monooxygenase; part of the gene cluster that mediates the biosynthesis of sesquiterpenyl epoxy-cyclohexenoids (SECs) such as anthrobotrisins and arthrosporols, metabolites that possess a novel hybrid carbon skeleton consisting of a polyketide-derived epoxycyclohexenol combined with a terpenoid-derived monocyclic sesquiterpenol substructure (PKS-PTS hybrid). The SEC pathway plays an important role for fungal soil colonization via decreasing fungal nematode-capturing ability. Within the pathway, the FAD-dependent monooxygenase AOL_s00215g279 plays a role in the oxygenation of the phenol moiety, most likely in the epoxy formation. The pathway begins with the biosynthesis of 6-methylsalicylic acid (6-MSA), the first precursor of the polyketide-derived epoxycyclohexenol in arthrosporols, by the polyketide synthase (PKS) AOL_s00215g283 via condensation of 1 acetate and 3 malonate units. The 6-methylsalicylic acid decarboxylase AOL_s00215g281 then catalyzes the decarboxylation of 6-methylsalicylic acid to yield m-cresol. The cytochrome P450 monooxygenase AOL_s00215g282 further oxidizes m-cresol to yield toluquinol. With the assistance of the oxidoreductase AOL_s00215g277, the polyprenyl transferase AOL_s00215g276 catalyzes the farnesylation of toluquinol to produce farnesyl hydroquinone, the hybrid precursor for biosynthesis of SECs. Farnesyl hydroquinone undergoes epoxidation and then subsequent dehydrogenation to form farnesyl epoxy-quinone, the first and simplest SEC. The cytochrome P450 monooxygenase AOL_s00215g278 and the FAD-dependent monooxygenase AOL_s00215g279 might be involved in the oxygenation of the phenol moiety, most likely in the epoxy formation. The cytochrome P450 monooxygenases AOL_s00215g274 and AOL_s00215g280 are involved in specific regional ketone reductions at respectively C-4 and C-1 of farnesyl epoxy-quinone PubMed:33823587. This Arthrobotrys oligospora (strain ATCC 24927 / CBS 115.81 / DSM 1491) (Nematode-trapping fungus) protein is FAD-dependent monooxygenase AOL_s00215g279.